The primary structure comprises 344 residues: Endoplasmic reticulum junction formation protein lunapark-1 (344 aa).

At 1-39 (MGNLFSRTKSPATELERVVLSIEDFKKRLQTISASNSST) the chain is on the cytoplasmic side. The helical transmembrane segment at 40–60 (LYYYYMGVIIILSIAMAHTWL) threads the bilayer. Over 61–68 (RFDDPTKT) the chain is Lumenal. Residues 69–89 (YVACALVFGATVIVLTGRYII) traverse the membrane as a helical segment. At 90–344 (NCFFAWRTNR…ADETAVVEKS (255 aa)) the chain is on the cytoplasmic side. The stretch at 116 to 140 (DLVKETLKFKEAKEILDRYEEKTEA) forms a coiled coil. Disordered regions lie at residues 136-155 (EKTE…HQQK) and 171-192 (QKRV…IAFD). Polar residues predominate over residues 140-155 (AGNTPTENSKLIHQQK). Residues 239–264 (CSICHTHNGMSVPAEYPFISFRCFEC) form a C4-type; plays a role in ER morphology zinc finger. The tract at residues 275–344 (PHLPITRPPM…ADETAVVEKS (70 aa)) is disordered. Positions 312 to 326 (PNPSTDLTPSASQHG) are enriched in polar residues. Residues 327-344 (SDSEPEKNADETAVVEKS) are compositionally biased toward basic and acidic residues.

This sequence belongs to the lunapark family.

It localises to the endoplasmic reticulum membrane. Plays a role in tubular endoplasmic reticulum network formation and maintenance. May be involved in central nervous system development. Has a presynaptic role in neurotransmission. Likely to operate in synaptogenesis by regulating vesicular transport or localization. Required for correct localization of rab-3 and snb-1. The sequence is that of Endoplasmic reticulum junction formation protein lunapark-1 from Caenorhabditis briggsae.